The chain runs to 556 residues: Glycosyl hydrolase 5 family protein (556 aa).

The signal sequence occupies residues 1–28; it reads MTSAGVAPTALRLLTALLLLLVAAPSHS. N102 and N113 each carry an N-linked (GlcNAc...) asparagine glycan. E208 acts as the Proton donor/acceptor in catalysis. N212, N290, and N307 each carry an N-linked (GlcNAc...) asparagine glycan. E473 serves as the catalytic Nucleophile. N-linked (GlcNAc...) asparagine glycosylation is found at N474 and N479.

Belongs to the glycosyl hydrolase 5 (cellulase A) family. In terms of processing, glycosylated.

May have glycosyl hydrolase activity. This Chamaecyparis obtusa (Hinoki false-cypress) protein is Glycosyl hydrolase 5 family protein.